Consider the following 99-residue polypeptide: Plastocyanin (99 aa).

The region spanning 1–99 is the Plastocyanin-like domain; it reads AEVLLGSSDG…AGMVGKVTVN (99 aa). 4 residues coordinate Cu cation: His37, Cys84, His87, and Met92.

This sequence belongs to the plastocyanin family. It depends on Cu(2+) as a cofactor.

It is found in the plastid. It localises to the chloroplast thylakoid membrane. Participates in electron transfer between P700 and the cytochrome b6-f complex in photosystem I. The chain is Plastocyanin (PETE) from Lactuca sativa (Garden lettuce).